A 480-amino-acid polypeptide reads, in one-letter code: Adenosylhomocysteinase (480 aa).

Substrate contacts are provided by Thr63, Asp142, and Glu203. Residue Thr204–Thr206 coordinates NAD(+). The substrate site is built by Lys233 and Asp237. NAD(+)-binding positions include Asn238, Gly267–Gly272, Glu290, Asn325, Ile346–His348, and Asn394.

This sequence belongs to the adenosylhomocysteinase family. The cofactor is NAD(+).

The protein resides in the cytoplasm. The catalysed reaction is S-adenosyl-L-homocysteine + H2O = L-homocysteine + adenosine. The protein operates within amino-acid biosynthesis; L-homocysteine biosynthesis; L-homocysteine from S-adenosyl-L-homocysteine: step 1/1. Functionally, may play a key role in the regulation of the intracellular concentration of adenosylhomocysteine. This is Adenosylhomocysteinase from Xylella fastidiosa (strain 9a5c).